The primary structure comprises 227 residues: Leucyl/phenylalanyl-tRNA--protein transferase (227 aa).

This sequence belongs to the L/F-transferase family.

Its subcellular location is the cytoplasm. The catalysed reaction is N-terminal L-lysyl-[protein] + L-leucyl-tRNA(Leu) = N-terminal L-leucyl-L-lysyl-[protein] + tRNA(Leu) + H(+). The enzyme catalyses N-terminal L-arginyl-[protein] + L-leucyl-tRNA(Leu) = N-terminal L-leucyl-L-arginyl-[protein] + tRNA(Leu) + H(+). It catalyses the reaction L-phenylalanyl-tRNA(Phe) + an N-terminal L-alpha-aminoacyl-[protein] = an N-terminal L-phenylalanyl-L-alpha-aminoacyl-[protein] + tRNA(Phe). Functions in the N-end rule pathway of protein degradation where it conjugates Leu, Phe and, less efficiently, Met from aminoacyl-tRNAs to the N-termini of proteins containing an N-terminal arginine or lysine. In Desulfotalea psychrophila (strain LSv54 / DSM 12343), this protein is Leucyl/phenylalanyl-tRNA--protein transferase.